Consider the following 473-residue polypeptide: tRNA-2-methylthio-N(6)-dimethylallyladenosine synthase (473 aa).

A disordered region spans residues 1-21 (MTQDSALLQAPEAIPSESLRD). In terms of domain architecture, MTTase N-terminal spans 26–146 (RKVFIKTYGC…LPEALRRAKQ (121 aa)). [4Fe-4S] cluster is bound by residues C35, C71, C109, C187, C191, and C194. A Radical SAM core domain is found at 173–405 (RARGVTAFLT…QMLLLKQQQE (233 aa)). A TRAM domain is found at 408–470 (ESCVGKEIDL…TNSLFAEHAE (63 aa)).

The protein belongs to the methylthiotransferase family. MiaB subfamily. In terms of assembly, monomer. It depends on [4Fe-4S] cluster as a cofactor.

The protein localises to the cytoplasm. It carries out the reaction N(6)-dimethylallyladenosine(37) in tRNA + (sulfur carrier)-SH + AH2 + 2 S-adenosyl-L-methionine = 2-methylsulfanyl-N(6)-dimethylallyladenosine(37) in tRNA + (sulfur carrier)-H + 5'-deoxyadenosine + L-methionine + A + S-adenosyl-L-homocysteine + 2 H(+). Catalyzes the methylthiolation of N6-(dimethylallyl)adenosine (i(6)A), leading to the formation of 2-methylthio-N6-(dimethylallyl)adenosine (ms(2)i(6)A) at position 37 in tRNAs that read codons beginning with uridine. This chain is tRNA-2-methylthio-N(6)-dimethylallyladenosine synthase, found in Rhizobium johnstonii (strain DSM 114642 / LMG 32736 / 3841) (Rhizobium leguminosarum bv. viciae).